Here is a 29-residue protein sequence, read N- to C-terminus: Cycloviolacin-O16 (29 aa).

The cyclopeptide (Gly-Asn) cross-link spans 1-29 (GLPCGETCFTGKCYTPGCSCSYPICKKIN). Intrachain disulfides connect Cys4/Cys18, Cys8/Cys20, and Cys13/Cys25.

This is a cyclic peptide.

Its function is as follows. Probably participates in a plant defense mechanism. This Viola odorata (Sweet violet) protein is Cycloviolacin-O16.